We begin with the raw amino-acid sequence, 419 residues long: MDLTVEKSGNLEGTVKAPPSKSYTHRAVIIAALAEGVSEIRDPLIAEDTLSSLNACRAFGIRVDEGDAWTVHGSGGELETPDDVIYLGNSGTTLRLMTSVAGLAENYTVLTGDESLRTRPMQPLLDALRPLGVEALSSRMNGLPPIIVRGGLRGGSTSIRGDVSSQFISSILIAAPLTEGVEVMVEGDFISRPYVDMTVDVMERFSVPVDYSEGTFRVEPAVYRGLDYTVEGDYSSASYLAGAVAAAGGDVLIENLFRDSRQGDRIILDIISDMGAEVRRGEDHVRIASTGELSGVSVNLHDAPDLLPTVAVLGALATGRTEIGGVEHARYKETDRISTCAAELRRLGVDVTELPDGMIIEGGASGGTVWSHGDHRLAMAFTLIGLREGITIRDAEVFSVSFPDFPERMMQIGCRMNLS.

3-phosphoshikimate-binding residues include lysine 21, serine 22, and arginine 26. Lysine 21 is a phosphoenolpyruvate binding site. Residues glycine 91 and arginine 119 each contribute to the phosphoenolpyruvate site. Residues serine 164, serine 165, glutamine 166, serine 191, aspartate 305, and lysine 332 each contribute to the 3-phosphoshikimate site. Glutamine 166 is a phosphoenolpyruvate binding site. Aspartate 305 functions as the Proton acceptor in the catalytic mechanism. Residues arginine 336 and arginine 376 each contribute to the phosphoenolpyruvate site.

This sequence belongs to the EPSP synthase family. As to quaternary structure, monomer.

The protein localises to the cytoplasm. It carries out the reaction 3-phosphoshikimate + phosphoenolpyruvate = 5-O-(1-carboxyvinyl)-3-phosphoshikimate + phosphate. Its pathway is metabolic intermediate biosynthesis; chorismate biosynthesis. In terms of biological role, catalyzes the transfer of the enolpyruvyl moiety of phosphoenolpyruvate (PEP) to the 5-hydroxyl of shikimate-3-phosphate (S3P) to produce enolpyruvyl shikimate-3-phosphate and inorganic phosphate. This chain is 3-phosphoshikimate 1-carboxyvinyltransferase, found in Methanothermobacter thermautotrophicus (strain ATCC 29096 / DSM 1053 / JCM 10044 / NBRC 100330 / Delta H) (Methanobacterium thermoautotrophicum).